The following is a 306-amino-acid chain: tRNA pseudouridine synthase B (306 aa).

Residue aspartate 48 is the Nucleophile of the active site.

Belongs to the pseudouridine synthase TruB family. Type 1 subfamily.

It catalyses the reaction uridine(55) in tRNA = pseudouridine(55) in tRNA. Responsible for synthesis of pseudouridine from uracil-55 in the psi GC loop of transfer RNAs. This Haemophilus influenzae (strain PittEE) protein is tRNA pseudouridine synthase B.